The chain runs to 240 residues: MEDLVCVSNHNICIHISVNILFIDIYITILMSKQESDNVFWIYDPMILFRDGNYLKIFPTKDMTQIQVLNALTRLCIYLAIIFVLVSAISGYAYVPIIFILIIIVIYFFNNNKNSVQTEMFDDNYPNTNNSDNIDNTDNIMNKQNYKKISDYNPYMNLTLNDIGSGNDDLEANLVELPKDSNRKFYTTSSTTNPNKQEDFMKWIYDLPETCKENQACCLRHEDVRFKRHNPDIDSPTPNS.

3 helical membrane passes run 12-32, 66-86, and 89-109; these read ICIH…ILMS, IQVL…FVLV, and ISGY…IYFF. N-linked (GlcNAc...) asparagine; by host glycans are attached at residues N129 and N157.

The protein localises to the membrane. This is an uncharacterized protein from Acanthamoeba polyphaga mimivirus (APMV).